The primary structure comprises 86 residues: Cytochrome c-555 (86 aa).

Heme c contacts are provided by Cys-14, Cys-17, His-18, and Met-60.

In terms of processing, binds 1 heme c group covalently per subunit.

This basic c-type monoheme cytochrome has been found exclusively in the green photosynthetic bacteria, although its role in bacterial photosynthesis is not established. It has an unusually low redox potential compared with mitochondrial cytochrome c. It is reactive with cytochrome c oxidases but not with reductases. The chain is Cytochrome c-555 from Chlorobaculum thiosulfatiphilum (Chlorobium limicola f.sp. thiosulfatophilum).